We begin with the raw amino-acid sequence, 576 residues long: Proline--tRNA ligase (576 aa).

The protein belongs to the class-II aminoacyl-tRNA synthetase family. ProS type 1 subfamily. In terms of assembly, homodimer.

It localises to the cytoplasm. The catalysed reaction is tRNA(Pro) + L-proline + ATP = L-prolyl-tRNA(Pro) + AMP + diphosphate. Functionally, catalyzes the attachment of proline to tRNA(Pro) in a two-step reaction: proline is first activated by ATP to form Pro-AMP and then transferred to the acceptor end of tRNA(Pro). As ProRS can inadvertently accommodate and process non-cognate amino acids such as alanine and cysteine, to avoid such errors it has two additional distinct editing activities against alanine. One activity is designated as 'pretransfer' editing and involves the tRNA(Pro)-independent hydrolysis of activated Ala-AMP. The other activity is designated 'posttransfer' editing and involves deacylation of mischarged Ala-tRNA(Pro). The misacylated Cys-tRNA(Pro) is not edited by ProRS. This is Proline--tRNA ligase from Leptospira borgpetersenii serovar Hardjo-bovis (strain L550).